Consider the following 32-residue polypeptide: C-reactive protein (32 aa).

In terms of domain architecture, Pentraxin (PTX) spans 2–32; that stretch reads VIKTLVFQSESNNSFVELIPMKPLNLRAFXL.

Belongs to the pentraxin family. In terms of assembly, homopentamer. Pentraxin (or pentaxin) have a discoid arrangement of 5 non-covalently bound subunits. Glycosylated.

Its subcellular location is the secreted. Functionally, displays several functions associated with host defense: it promotes agglutination, bacterial capsular swelling, phagocytosis, and complement fixation through its calcium-dependent binding to phosphorylcholine. The polypeptide is C-reactive protein (Pleuronectes platessa (European plaice)).